A 156-amino-acid chain; its full sequence is Small ribosomal subunit protein uS7 (156 aa).

The protein belongs to the universal ribosomal protein uS7 family. As to quaternary structure, part of the 30S ribosomal subunit. Contacts proteins S9 and S11.

In terms of biological role, one of the primary rRNA binding proteins, it binds directly to 16S rRNA where it nucleates assembly of the head domain of the 30S subunit. Is located at the subunit interface close to the decoding center, probably blocks exit of the E-site tRNA. The polypeptide is Small ribosomal subunit protein uS7 (rpsG) (Geobacillus stearothermophilus (Bacillus stearothermophilus)).